A 187-amino-acid polypeptide reads, in one-letter code: GTP cyclohydrolase 1 (187 aa).

Zn(2+)-binding residues include C76, H79, and C148.

Belongs to the GTP cyclohydrolase I family. As to quaternary structure, toroid-shaped homodecamer, composed of two pentamers of five dimers.

The enzyme catalyses GTP + H2O = 7,8-dihydroneopterin 3'-triphosphate + formate + H(+). It functions in the pathway cofactor biosynthesis; 7,8-dihydroneopterin triphosphate biosynthesis; 7,8-dihydroneopterin triphosphate from GTP: step 1/1. The sequence is that of GTP cyclohydrolase 1 from Streptococcus agalactiae serotype Ia (strain ATCC 27591 / A909 / CDC SS700).